Reading from the N-terminus, the 207-residue chain is MTKGILGTKIGMTQIWKGDRAVPVTVVLAGPCPVVQRKTKLTDGYEAVQLGFAPKSEKRVNRPELGHFKKAGVAPMRFLREFRDFAPEGDTVNVDIFAEGEKIDATGTSKGKGTQGVMKRWNFAGGPASHGSKKWHRRPGSIGQRKTPGRVYKGKRMAGHMGMERVTVQNLEVVEVRADENLILVKGAIPGANGGLVMLRQAAKGGK.

The segment at 126–149 is disordered; it reads GPASHGSKKWHRRPGSIGQRKTPG.

Belongs to the universal ribosomal protein uL3 family. Part of the 50S ribosomal subunit. Forms a cluster with proteins L14 and L19.

Functionally, one of the primary rRNA binding proteins, it binds directly near the 3'-end of the 23S rRNA, where it nucleates assembly of the 50S subunit. This Deinococcus geothermalis (strain DSM 11300 / CIP 105573 / AG-3a) protein is Large ribosomal subunit protein uL3.